Reading from the N-terminus, the 251-residue chain is 3-deoxy-manno-octulosonate cytidylyltransferase (251 aa).

The protein belongs to the KdsB family.

Its subcellular location is the cytoplasm. The enzyme catalyses 3-deoxy-alpha-D-manno-oct-2-ulosonate + CTP = CMP-3-deoxy-beta-D-manno-octulosonate + diphosphate. Its pathway is nucleotide-sugar biosynthesis; CMP-3-deoxy-D-manno-octulosonate biosynthesis; CMP-3-deoxy-D-manno-octulosonate from 3-deoxy-D-manno-octulosonate and CTP: step 1/1. It participates in bacterial outer membrane biogenesis; lipopolysaccharide biosynthesis. In terms of biological role, activates KDO (a required 8-carbon sugar) for incorporation into bacterial lipopolysaccharide in Gram-negative bacteria. The protein is 3-deoxy-manno-octulosonate cytidylyltransferase of Parabacteroides distasonis (strain ATCC 8503 / DSM 20701 / CIP 104284 / JCM 5825 / NCTC 11152).